We begin with the raw amino-acid sequence, 739 residues long: Catalase-peroxidase (739 aa).

The signal sequence occupies residues 1-23 (MLKKIVTALGMSGMLLASNSAIA). Residues 100 to 221 (WHDAGTYRIY…YAATQMGLIY (122 aa)) constitute a cross-link (tryptophyl-tyrosyl-methioninium (Trp-Tyr) (with M-247)). The Proton acceptor role is filled by His101. The tryptophyl-tyrosyl-methioninium (Tyr-Met) (with W-100) cross-link spans 221–247 (YVNPEGPDGKPDIKGAASEIRQAFRAM). His262 is a binding site for heme b.

Belongs to the peroxidase family. Peroxidase/catalase subfamily. In terms of assembly, homodimer or homotetramer. Heme b serves as cofactor. Post-translationally, formation of the three residue Trp-Tyr-Met cross-link is important for the catalase, but not the peroxidase activity of the enzyme.

It carries out the reaction H2O2 + AH2 = A + 2 H2O. The catalysed reaction is 2 H2O2 = O2 + 2 H2O. Functionally, bifunctional enzyme with both catalase and broad-spectrum peroxidase activity. This is Catalase-peroxidase from Francisella tularensis subsp. novicida (strain U112).